Reading from the N-terminus, the 307-residue chain is Peroxisomal protein PEX21 (307 aa).

Residue Cys-4 forms a Glycyl cysteine thioester (Cys-Gly) (interchain with G-Cter in ubiquitin) linkage. A disordered region spans residues 23-52 (VGRVGGFNRPSGGLGQSSAEQQLQARAGER).

This sequence belongs to the peroxin-21 family. Interacts with PEX7. Post-translationally, monoubiquitinated at Cys-4; acts as a signal for PEX21 extraction and is required for proper export from peroxisomes and recycling.

Its subcellular location is the cytoplasm. It is found in the cytosol. The protein resides in the peroxisome. In terms of biological role, mediates peroxisomal import of proteins containing a C-terminal PTS2-type peroxisomal targeting signal via its interaction with PEX7. Interaction with PEX7 only takes place when PEX7 is associated with cargo proteins containing a PTS2 peroxisomal targeting signal. PEX7 along with PTS2-containing cargo proteins are then translocated through the PEX13-PEX14 docking complex together with PEX21. The polypeptide is Peroxisomal protein PEX21 (PEX21) (Eremothecium gossypii (strain ATCC 10895 / CBS 109.51 / FGSC 9923 / NRRL Y-1056) (Yeast)).